The sequence spans 352 residues: 7,8-didemethyl-8-hydroxy-5-deazariboflavin synthase (352 aa).

A Radical SAM core domain is found at 35 to 275; it reads ITFSKNAFIP…EDISIQVPPN (241 aa). Positions 49, 53, and 56 each coordinate [4Fe-4S] cluster.

This sequence belongs to the radical SAM superfamily. CofG family. As to quaternary structure, consists of two subunits, CofG and CofH. The cofactor is [4Fe-4S] cluster.

The enzyme catalyses 5-amino-5-(4-hydroxybenzyl)-6-(D-ribitylimino)-5,6-dihydrouracil + S-adenosyl-L-methionine = 7,8-didemethyl-8-hydroxy-5-deazariboflavin + 5'-deoxyadenosine + L-methionine + NH4(+) + H(+). Its pathway is cofactor biosynthesis; coenzyme F0 biosynthesis. Functionally, catalyzes the radical-mediated synthesis of 7,8-didemethyl-8-hydroxy-5-deazariboflavin from 5-amino-5-(4-hydroxybenzyl)-6-(D-ribitylimino)-5,6-dihydrouracil. This is 7,8-didemethyl-8-hydroxy-5-deazariboflavin synthase from Methanococcus maripaludis (strain C6 / ATCC BAA-1332).